The primary structure comprises 90 residues: uncharacterized protein (90 aa).

The N-terminal stretch at 1–18 (MSRALFAVVLAFPLIALA) is a signal peptide.

This is an uncharacterized protein from Escherichia coli (strain K12).